The primary structure comprises 350 residues: Protein-glutamate methylesterase/protein-glutamine glutaminase (350 aa).

In terms of domain architecture, Response regulatory spans 5–122 (RVLCVDDSAL…REGMLAYSEL (118 aa)). At D56 the chain carries 4-aspartylphosphate. Positions 153–345 (LLSSEKLIAI…QRMLAQISAG (193 aa)) constitute a CheB-type methylesterase domain. Active-site residues include S165, H191, and D287.

Belongs to the CheB family. Phosphorylated by CheA. Phosphorylation of the N-terminal regulatory domain activates the methylesterase activity.

It is found in the cytoplasm. The catalysed reaction is [protein]-L-glutamate 5-O-methyl ester + H2O = L-glutamyl-[protein] + methanol + H(+). It carries out the reaction L-glutaminyl-[protein] + H2O = L-glutamyl-[protein] + NH4(+). Involved in chemotaxis. Part of a chemotaxis signal transduction system that modulates chemotaxis in response to various stimuli. Catalyzes the demethylation of specific methylglutamate residues introduced into the chemoreceptors (methyl-accepting chemotaxis proteins or MCP) by CheR. Also mediates the irreversible deamidation of specific glutamine residues to glutamic acid. Does not interact with the C-terminal pentapeptide of the chemoreceptors. This is Protein-glutamate methylesterase/protein-glutamine glutaminase from Pectobacterium atrosepticum (strain SCRI 1043 / ATCC BAA-672) (Erwinia carotovora subsp. atroseptica).